The primary structure comprises 431 residues: E3 ubiquitin-protein ligase RNF128 (431 aa).

The N-terminal stretch at Met1–Gly38 is a signal peptide. Residues Asn48, Asn59, and Asn101 are each glycosylated (N-linked (GlcNAc...) asparagine). The 112-residue stretch at Ser75–Ile186 folds into the PA domain. Residues Ile211–Phe231 traverse the membrane as a helical segment. An RING-type; atypical zinc finger spans residues Cys280–Lys321. Residues Val345–Ser354 are compositionally biased toward polar residues. The disordered stretch occupies residues Val345–Ser431.

Post-translationally, auto-ubiquitinated. Controls the development of T-cell clonal anergy by ubiquitination.

The protein localises to the cytoplasm. It localises to the endomembrane system. The protein resides in the cytoskeleton. It is found in the perinuclear region. The enzyme catalyses S-ubiquitinyl-[E2 ubiquitin-conjugating enzyme]-L-cysteine + [acceptor protein]-L-lysine = [E2 ubiquitin-conjugating enzyme]-L-cysteine + N(6)-ubiquitinyl-[acceptor protein]-L-lysine.. The protein operates within protein modification; protein ubiquitination. In terms of biological role, E3 ubiquitin-protein ligase that catalyzes 'Lys-27', 'Lys-48'- or 'Lys-63'-linked polyubiquitin chains formation and plays a role in different biological processes such as modulation of immune response, cytoskeletal dynamics or protein homeostasis. Inhibits IL2 and IL4 transcription, thereby playing an important role in the induction of the anergic phenotype, a long-term stable state of T-lymphocyte unresponsiveness to antigenic stimulation associated with the blockade of interleukin production. Ubiquitinates ARPC5 with 'Lys-48' linkages and COR1A with 'Lys-63' linkages leading to their degradation, down-regulation of these cytoskeletal components results in impaired lamellipodium formation and reduced accumulation of F-actin at the immunological synapse. Functions in the patterning of the dorsal ectoderm; sensitizes ectoderm to respond to neural-inducing signals. Plays a positive role in innate immune response by promoting 'Lys-63'-linked ubiquitination of TBK1 after RNA- or DNA-virus infection. Regulates alveolar macrophage activation and neutrophil infiltration by interacting with TLR4, targeting it for degradation, and inhibiting NF-kappa-B activation, hence decreasing pro-inflammatory cytokines. Negatively regulates the IL-3/STAT5 signaling pathway by facilitating 'Lys-27'-linked polyubiquitination of IL3RA leading to its degradation via lysosomal pathway. Directly regulates the N-glycosylation process in the endoplasmic reticulum by targeting the glycosyl-transferase RPN1 for ubiquitination and degradation. Other substrates targeted for degradation by RNF128 include transmembrane proteins CD40L, CD83 or the tetraspanin CD151. This chain is E3 ubiquitin-protein ligase RNF128 (RNF128), found in Bos taurus (Bovine).